Reading from the N-terminus, the 1142-residue chain is Auxin response factor 5 (1142 aa).

Positions 148–250 form a DNA-binding region, TF-B3; sequence FCKTLTASDT…QLLLGIRRAN (103 aa). The 85-residue stretch at 1009–1093 folds into the PB1 domain; the sequence is RTFTKVYKRG…RCIRILSPQE (85 aa). The segment at 1114–1142 is disordered; sequence SSSDGVNGWRPRCDQNPGNPSIGPYDQFE.

The protein belongs to the ARF family. As to quaternary structure, homodimers and heterodimers. In terms of tissue distribution, expressed in roots, culms, leaves and young panicles.

The protein localises to the nucleus. Its function is as follows. Auxin response factors (ARFs) are transcriptional factors that bind specifically to the DNA sequence 5'-TGTCTC-3' found in the auxin-responsive promoter elements (AuxREs). The protein is Auxin response factor 5 (ARF5) of Oryza sativa subsp. japonica (Rice).